Consider the following 666-residue polypeptide: Pantothenate kinase 1 (666 aa).

This sequence belongs to the type II pantothenate kinase family.

The enzyme catalyses (R)-pantothenate + ATP = (R)-4'-phosphopantothenate + ADP + H(+). It participates in cofactor biosynthesis; coenzyme A biosynthesis; CoA from (R)-pantothenate: step 1/5. With respect to regulation, regulated by feedback inhibition by malonyl-CoA. Catalyzes the phosphorylation of pantothenate the first step in CoA biosynthesis. May play a role in the physiological regulation of the intracellular CoA concentration. The protein is Pantothenate kinase 1 of Oryza sativa subsp. japonica (Rice).